Consider the following 715-residue polypeptide: Targeting protein for Xklp2-B (715 aa).

Residues 36-167 (NAENIPPDQK…LTMPATPTVL (132 aa)) form a disordered region. The segment covering 47–56 (LSETSVNAEQ) has biased composition (polar residues). Residues 85–103 (QTKRSARRMSKKHRQKILL) show a composition bias toward basic residues. Basic and acidic residues predominate over residues 104-115 (KMKETHLEKETA). The span at 141-152 (QPTSSHHGTTSP) shows a compositional bias: polar residues. A Phosphoserine; by plk1 modification is found at serine 204. 2 disordered regions span residues 260-291 (PPTS…EEAS) and 314-337 (RSRQ…TNPK).

This sequence belongs to the TPX2 family. Associates with microtubules. Interacts with aurka and plk1. Interacts with kif15. In terms of processing, phosphorylated during mitosis. Hyperphosphorylated upon assembly of microtubules.

The protein resides in the nucleus. It localises to the cytoplasm. Its subcellular location is the cytoskeleton. The protein localises to the spindle. It is found in the spindle pole. Its function is as follows. Spindle assembly factor. Required for normal assembly of mitotic spindles. Mediates the binding kif15 and aurka to spindle microtubules. Required for targeting kif15 to microtubule minus ends. Activates aurka by promoting its autophosphorylation and protects the phosphorylated residue against dephosphorylation. The chain is Targeting protein for Xklp2-B (tpx2-b) from Xenopus laevis (African clawed frog).